A 122-amino-acid chain; its full sequence is Large ribosomal subunit protein uL18 (122 aa).

This sequence belongs to the universal ribosomal protein uL18 family. Part of the 50S ribosomal subunit; part of the 5S rRNA/L5/L18/L25 subcomplex. Contacts the 5S and 23S rRNAs.

Its function is as follows. This is one of the proteins that bind and probably mediate the attachment of the 5S RNA into the large ribosomal subunit, where it forms part of the central protuberance. The protein is Large ribosomal subunit protein uL18 of Syntrophotalea carbinolica (strain DSM 2380 / NBRC 103641 / GraBd1) (Pelobacter carbinolicus).